Reading from the N-terminus, the 635-residue chain is Kelch-like protein 31 (635 aa).

One can recognise a BTB domain in the interval 74 to 138; sequence CDLTVATKSK…AYSGKLTLSL (65 aa). The BACK domain maps to 173-274; it reads CMYVVNIADT…TPQDLVSHVQ (102 aa). Kelch repeat units follow at residues 318 to 366, 367 to 420, 421 to 467, 469 to 514, 516 to 566, and 567 to 615; these read VLLT…VLDG, FLYV…TFNG, LLFA…VIDG, ILVS…TVGD, AYVL…TLNN, and KIYL…VVTI.

In terms of tissue distribution, strongly expressed in fast skeletal muscle, and weakly in heart. Not expressed in other tissues.

The sequence is that of Kelch-like protein 31 (klhl31) from Danio rerio (Zebrafish).